A 188-amino-acid chain; its full sequence is Adenine phosphoribosyltransferase (188 aa).

This sequence belongs to the purine/pyrimidine phosphoribosyltransferase family. In terms of assembly, homodimer.

It localises to the cytoplasm. The enzyme catalyses AMP + diphosphate = 5-phospho-alpha-D-ribose 1-diphosphate + adenine. It functions in the pathway purine metabolism; AMP biosynthesis via salvage pathway; AMP from adenine: step 1/1. Catalyzes a salvage reaction resulting in the formation of AMP, that is energically less costly than de novo synthesis. This Burkholderia orbicola (strain MC0-3) protein is Adenine phosphoribosyltransferase.